A 356-amino-acid chain; its full sequence is ADP-ribosylhydrolase ARH3 (356 aa).

Residues aspartate 26, glutamate 33, threonine 62, aspartate 63, and aspartate 64 each coordinate Mg(2+). Aspartate 63 contacts substrate. Substrate contacts are provided by residues 132-138, histidine 168, and isoleucine 260; that span reads KGSYGNG. Mg(2+)-binding residues include aspartate 303, aspartate 305, and threonine 306.

The protein belongs to the ADP-ribosylglycohydrolase family. As to quaternary structure, monomer. The cofactor is Mg(2+). Mn(2+) serves as cofactor.

It localises to the nucleus. It is found in the cytoplasm. Its subcellular location is the chromosome. The protein resides in the mitochondrion matrix. It carries out the reaction [(1''-&gt;2')-ADP-alpha-D-ribose](n) + H2O = [(1''-&gt;2')-ADP-alpha-D-ribose](n-1) + ADP-D-ribose. It catalyses the reaction 1''-O-acetyl-ADP-alpha-D-ribose + H2O = ADP-D-ribose + acetate + H(+). The enzyme catalyses O-(ADP-D-ribosyl)-L-seryl-[protein] + H2O = ADP-D-ribose + L-seryl-[protein]. The catalysed reaction is alpha-NAD(+) + H2O = ADP-D-ribose + nicotinamide + H(+). The protein undergoes a dramatic conformational switch from closed to open states upon substrate-binding, which enables specific substrate recognition for the 1''-O-linkage. The glutamate flap (Glu-33) blocks substrate entrance to Mg(2+) in the unliganded closed state. In presence of substrate, Glu-33 is ejected from the active site: this closed-to-open transition significantly widens the substrate-binding channel and precisely positions the scissile 1''-O-linkage for cleavage while securing tightly 2'- and 3'-hydroxyls of ADP-ribose. Activity is inhibited by calcium. In terms of biological role, ADP-ribosylhydrolase that preferentially hydrolyzes the scissile alpha-O-linkage attached to the anomeric C1'' position of ADP-ribose and acts on different substrates, such as proteins ADP-ribosylated on serine and threonine, free poly(ADP-ribose) and O-acetyl-ADP-D-ribose. Specifically acts as a serine mono-ADP-ribosylhydrolase by mediating the removal of mono-ADP-ribose attached to serine residues on proteins, thereby playing a key role in DNA damage response. Serine ADP-ribosylation of proteins constitutes the primary form of ADP-ribosylation of proteins in response to DNA damage. Does not hydrolyze ADP-ribosyl-arginine, -cysteine, -diphthamide, or -asparagine bonds. Also able to degrade protein free poly(ADP-ribose), which is synthesized in response to DNA damage: free poly(ADP-ribose) acts as a potent cell death signal and its degradation by ADPRHL2 protects cells from poly(ADP-ribose)-dependent cell death, a process named parthanatos. Also hydrolyzes free poly(ADP-ribose) in mitochondria. Specifically digests O-acetyl-ADP-D-ribose, a product of deacetylation reactions catalyzed by sirtuins. Specifically degrades 1''-O-acetyl-ADP-D-ribose isomer, rather than 2''-O-acetyl-ADP-D-ribose or 3''-O-acetyl-ADP-D-ribose isomers. The protein is ADP-ribosylhydrolase ARH3 (adprs) of Latimeria chalumnae (Coelacanth).